A 208-amino-acid chain; its full sequence is Na(+)-translocating NADH-quinone reductase subunit D (208 aa).

The next 5 membrane-spanning stretches (helical) occupy residues 42–62, 70–90, 103–123, 131–151, and 178–198; these read IVMT…ISLI, VRII…DQIL, VFVG…AFAM, FVDG…VAFI, and NGLF…IWGI.

It belongs to the NqrDE/RnfAE family. Composed of six subunits; NqrA, NqrB, NqrC, NqrD, NqrE and NqrF.

Its subcellular location is the cell inner membrane. The catalysed reaction is a ubiquinone + n Na(+)(in) + NADH + H(+) = a ubiquinol + n Na(+)(out) + NAD(+). Its function is as follows. NQR complex catalyzes the reduction of ubiquinone-1 to ubiquinol by two successive reactions, coupled with the transport of Na(+) ions from the cytoplasm to the periplasm. NqrA to NqrE are probably involved in the second step, the conversion of ubisemiquinone to ubiquinol. This Pasteurella multocida (strain Pm70) protein is Na(+)-translocating NADH-quinone reductase subunit D.